A 401-amino-acid chain; its full sequence is UDP-N-acetylglucosamine--N-acetylmuramyl-(pentapeptide) pyrophosphoryl-undecaprenol N-acetylglucosamine transferase (401 aa).

The segment at methionine 1–glutamate 24 is disordered. UDP-N-acetyl-alpha-D-glucosamine is bound by residues threonine 39–glycine 41, asparagine 157, arginine 194, serine 228, and glutamine 324.

This sequence belongs to the glycosyltransferase 28 family. MurG subfamily.

Its subcellular location is the cell membrane. It catalyses the reaction di-trans,octa-cis-undecaprenyl diphospho-N-acetyl-alpha-D-muramoyl-L-alanyl-D-glutamyl-meso-2,6-diaminopimeloyl-D-alanyl-D-alanine + UDP-N-acetyl-alpha-D-glucosamine = di-trans,octa-cis-undecaprenyl diphospho-[N-acetyl-alpha-D-glucosaminyl-(1-&gt;4)]-N-acetyl-alpha-D-muramoyl-L-alanyl-D-glutamyl-meso-2,6-diaminopimeloyl-D-alanyl-D-alanine + UDP + H(+). The protein operates within cell wall biogenesis; peptidoglycan biosynthesis. Cell wall formation. Catalyzes the transfer of a GlcNAc subunit on undecaprenyl-pyrophosphoryl-MurNAc-pentapeptide (lipid intermediate I) to form undecaprenyl-pyrophosphoryl-MurNAc-(pentapeptide)GlcNAc (lipid intermediate II). In Mycolicibacterium vanbaalenii (strain DSM 7251 / JCM 13017 / BCRC 16820 / KCTC 9966 / NRRL B-24157 / PYR-1) (Mycobacterium vanbaalenii), this protein is UDP-N-acetylglucosamine--N-acetylmuramyl-(pentapeptide) pyrophosphoryl-undecaprenol N-acetylglucosamine transferase.